The following is a 603-amino-acid chain: MVLASLSTGVIARIMHGEVVDAPVLQILAIKKINSAADSERYRILISDGKYFNSYAMLASQLNVMQHNGELEEFTIVQLDKYVTSLVGKDGAGKRVLIISELTVVNPGAEVKSKIGEPVTYENAAKQDLAPKPAVTSNSKPIAKKEPSHNNNNNIVMNSSINSGMTHPISSLSPYQNKWVIKARVTSKSGIRTWSNARGEGKLFSMDLMDESGEIRATAFKEQCDKFYDLIQVDSVYYISKCQLKPANKQYSSLNNAYEMTFSGETVVQLCEDTDDDPIPEIKYNLVPISDVSGMENKAAVDTIGICKEVGELQSFVARTTNKEFKKRDITLVDMSNSAISLTLWGDDAVNFDGHVQPVILVKGTRINEFNGGKSLSLGGGSIMKINPDIPEAHKLRGWFDNGGGDSVANMVSARTGGGSFSTEWMTLKDARARNLGSGDKPDYFQCKAVVHIVKQENAFYRACPQSDCNKKVVDEGNDQFRCEKCNALFPNFKYRLLINMSIGDWTSNRWVSSFNEVGEQLLGHTSQEVGEALENDPAKAEQIFSALNFTSHIFKLRCKNEVYGDMTRNKLTVQSVAPINHKEYNKHLLKELQELTGIGSSN.

Positions 131–152 are disordered; that stretch reads PKPAVTSNSKPIAKKEPSHNNN. A Phosphoserine modification is found at Ser-160. Positions 179–252 form a DNA-binding region, OB; the sequence is WVIKARVTSK…QLKPANKQYS (74 aa). Position 420 is a phosphoserine (Ser-420). A C4-type zinc finger spans residues 464-486; sequence CPQSDCNKKVVDEGNDQFRCEKC.

The protein belongs to the replication factor A protein 1 family. As to quaternary structure, component of the heterotrimeric canonical replication protein A complex (RPA).

Its subcellular location is the nucleus. As part of the heterotrimeric replication protein A complex (RPA/RP-A), binds and stabilizes single-stranded DNA intermediates, that form during DNA replication or upon DNA stress. It prevents their reannealing and in parallel, recruits and activates different proteins and complexes involved in DNA metabolism. Thereby, it plays an essential role both in DNA replication and the cellular response to DNA damage. This is Replication protein A 70 kDa DNA-binding subunit from Drosophila melanogaster (Fruit fly).